We begin with the raw amino-acid sequence, 199 residues long: NAD(P)H dehydrogenase (quinone) (199 aa).

Residues 4–190 (VLVLYYSAYG…DGARYQGRKI (187 aa)) enclose the Flavodoxin-like domain. Residues 10-15 (SAYGHI) and 78-80 (TRF) contribute to the FMN site. Tyr-12 contacts NAD(+). Trp-98 contributes to the substrate binding site. FMN-binding positions include 113 to 119 (STATQHG) and His-134.

It belongs to the WrbA family. It depends on FMN as a cofactor.

It catalyses the reaction a quinone + NADH + H(+) = a quinol + NAD(+). It carries out the reaction a quinone + NADPH + H(+) = a quinol + NADP(+). The chain is NAD(P)H dehydrogenase (quinone) from Xanthobacter autotrophicus (strain ATCC BAA-1158 / Py2).